We begin with the raw amino-acid sequence, 970 residues long: Pentatricopeptide repeat-containing protein At1g18485 (970 aa).

PPR repeat units follow at residues 119 to 149 (DDVL…LRSK), 150 to 185 (NLFQ…DLLP), 186 to 220 (DHFT…GLVE), 221 to 251 (DVFV…MPER), 252 to 282 (NLVS…MMEE), 291 to 325 (DVAT…RLDK), 326 to 356 (ELVL…NNNK), 357 to 391 (NVVS…GEDV), 394 to 428 (DEVT…EFVY), 429 to 459 (NELV…IRSK), 460 to 494 (TVNS…GLLP), 495 to 529 (DSFT…WLER), 530 to 560 (DLFV…MEDK), 561 to 595 (SLVS…GIQL), 597 to 630 (GISM…LLED), 631 to 661 (DAFI…LKEK), 662 to 696 (STAS…GHNP), 697 to 727 (DDLT…MKSS), and 733 to 764 (NLKH…MSEE). The interval 770-845 (WKSLLSSCRI…AGCSWIELNR (76 aa)) is type E motif. The tract at residues 846 to 875 (KVFSFVVGERFLDGFEEIKSLWSILEMKIS) is type E(+) motif. The tract at residues 876–970 (KMGYRPDTMS…NGVCSCGDYW (95 aa)) is type DYW motif.

Belongs to the PPR family. PCMP-H subfamily.

In Arabidopsis thaliana (Mouse-ear cress), this protein is Pentatricopeptide repeat-containing protein At1g18485 (PCMP-H8).